A 653-amino-acid chain; its full sequence is Multidomain regulatory protein Rv1364c (653 aa).

Phosphothreonine; by PknD is present on residues T54 and T81. In terms of domain architecture, PAC spans 86–142; sequence SGSEWRLQTDYDGSGVEERYFDFVVTPRRRADGSIEGVQLIVDDVTSRVRARQAAEA. One can recognise a PPM-type phosphatase domain in the interval 177–396; sequence DIAAEYLVAA…DDVTLLAMQR (220 aa). Mn(2+)-binding residues include D211 and V212. T299 is modified (phosphothreonine; by PknD). D328 and D387 together coordinate Mn(2+). Position 390 is a phosphothreonine; by PknD (T390). The tract at residues 397-544 is anti-sigma factor kinase region; sequence RAPTPPLHIT…TMVRRAAFQQ (148 aa). S506 is modified (phosphoserine; by PknD). Residues T520 and T568 each carry the phosphothreonine; by PknD modification. The 108-residue stretch at 546–653 folds into the STAS domain; sequence IDSEFVSLVE…ADTEDIFAQE (108 aa). S600 carries the phosphoserine; by autocatalysis modification.

As to quaternary structure, exists in solution as both monomer and dimer. Both the phosphorylated and unphosphorylated proteins form extended dimers. Interacts with SigF. Can efficiently bind to SigF independently of its autophosphorylation. Interaction between SigF and Rv1364c is reduced significantly upon the phosphorylation of both proteins by PknD. Requires Mn(2+) as cofactor. Mg(2+) serves as cofactor. In terms of processing, autophosphorylated. Phosphorylated by PknD on multiple threonine and serine residues. Phosphorylation is antagonized by the phosphatase activity.

The enzyme catalyses O-phospho-L-seryl-[protein] + H2O = L-seryl-[protein] + phosphate. It carries out the reaction O-phospho-L-threonyl-[protein] + H2O = L-threonyl-[protein] + phosphate. It catalyses the reaction L-seryl-[protein] + ATP = O-phospho-L-seryl-[protein] + ADP + H(+). The catalysed reaction is L-threonyl-[protein] + ATP = O-phospho-L-threonyl-[protein] + ADP + H(+). With respect to regulation, the phosphatase domain is activated by the anti-sigma factor kinase domain. Functionally, primarily acts as an independent SigF regulator that is sensitive to the osmosensory signal, mediating the cross talk of PknD with the SigF regulon. Possesses both phosphatase and kinase activities. The kinase domain functions as a classic anti-sigma factor-like kinase to phosphorylate the anti-anti-sigma factor domain at the canonical regulatory site, and the phosphatase domain antagonizes this activity. The protein is Multidomain regulatory protein Rv1364c of Mycobacterium tuberculosis (strain ATCC 25618 / H37Rv).